The chain runs to 715 residues: Beta-galactosidase 9 (715 aa).

The N-terminal stretch at 1–20 (MSGGAVAFLLLVAAAAVANA) is a signal peptide. The active-site Proton donor is the glutamate 178. Glutamate 247 functions as the Nucleophile in the catalytic mechanism.

The protein belongs to the glycosyl hydrolase 35 family.

The protein localises to the secreted. The protein resides in the extracellular space. It is found in the apoplast. The catalysed reaction is Hydrolysis of terminal non-reducing beta-D-galactose residues in beta-D-galactosides.. The protein is Beta-galactosidase 9 of Oryza sativa subsp. japonica (Rice).